Consider the following 207-residue polypeptide: N-(5'-phosphoribosyl)anthranilate isomerase (207 aa).

It belongs to the TrpF family.

It carries out the reaction N-(5-phospho-beta-D-ribosyl)anthranilate = 1-(2-carboxyphenylamino)-1-deoxy-D-ribulose 5-phosphate. Its pathway is amino-acid biosynthesis; L-tryptophan biosynthesis; L-tryptophan from chorismate: step 3/5. The sequence is that of N-(5'-phosphoribosyl)anthranilate isomerase from Legionella pneumophila (strain Paris).